The following is a 100-amino-acid chain: Omega-hexatoxin-Asp2b (100 aa).

The signal sequence occupies residues 1 to 23; the sequence is MKFSKLSITLAVILTQAVFVLCG. A propeptide spanning residues 24–55 is cleaved from the precursor; sequence MKNEDFMEKGLESNELHDAIKKPVNSGKPDTE. 3 cysteine pairs are disulfide-bonded: cysteine 60/cysteine 73, cysteine 66/cysteine 79, and cysteine 72/cysteine 84.

The protein belongs to the neurotoxin 15 family. 02 (omega-actx) subfamily. Expressed by the venom gland.

The protein resides in the secreted. Its function is as follows. Potent inhibitor of insect, but not mammalian, voltage-gated calcium channels (Cav). The chain is Omega-hexatoxin-Asp2b from Atrax sp. (strain Illawarra) (Funnel-web spider).